A 354-amino-acid chain; its full sequence is Stearoyl-CoA desaturase (354 aa).

The interval 1-28 (MPGHLLQEEMTSSYTTTTTTITEPPSES) is disordered. Over 1–67 (MPGHLLQEEM…EGPPPKLEYV (67 aa)) the chain is Cytoplasmic. Positions 8-28 (EEMTSSYTTTTTTITEPPSES) are enriched in low complexity. Residues 68–88 (WRNIILMALLHLGALYGLVLV) form a helical membrane-spanning segment. N70 contacts substrate. The Lumenal segment spans residues 89–92 (PSSK). The helical transmembrane segment at 93–113 (VYTLLWAFVYYVISIEGIGAG) threads the bilayer. Over 114–212 (VHRLWSHRTY…EKLVMFQRRY (99 aa)) the chain is Cytoplasmic. Positions 115 and 120 each coordinate Fe cation. The Histidine box-1 motif lies at 115–120 (HRLWSH). Residues N143, R150, and D151 each coordinate substrate. Residues H152, H155, and H156 each contribute to the Fe cation site. Residues 152–156 (HRAHH) carry the Histidine box-2 motif. Substrate-binding residues include R183 and K184. S198 carries the phosphoserine modification. A helical membrane pass occupies residues 213-232 (YKPAILLMCFILPTFVPWYF). At 233–236 (WGEA) the chain is on the lumenal side. The chain crosses the membrane as a helical span at residues 237 to 258 (FVNSLCVSTFLRYTLVLNATWL). W257 serves as a coordination point for substrate. Over 259-354 (VNSAAHLYGY…RTGDGSCKSG (96 aa)) the chain is Cytoplasmic. Fe cation is bound by residues H264, H293, H296, and H297. The Histidine box-3 motif lies at 293-297 (HNYHH).

Belongs to the fatty acid desaturase type 1 family. It depends on Fe(2+) as a cofactor.

The protein localises to the endoplasmic reticulum membrane. It catalyses the reaction octadecanoyl-CoA + 2 Fe(II)-[cytochrome b5] + O2 + 2 H(+) = (9Z)-octadecenoyl-CoA + 2 Fe(III)-[cytochrome b5] + 2 H2O. The catalysed reaction is hexadecanoyl-CoA + 2 Fe(II)-[cytochrome b5] + O2 + 2 H(+) = (9Z)-hexadecenoyl-CoA + 2 Fe(III)-[cytochrome b5] + 2 H2O. Stearoyl-CoA desaturase that utilizes O(2) and electrons from reduced cytochrome b5 to introduce the first double bond into saturated fatty acyl-CoA substrates. Catalyzes the insertion of a cis double bond at the delta-9 position into fatty acyl-CoA substrates including palmitoyl-CoA and stearoyl-CoA. Gives rise to a mixture of 16:1 and 18:1 unsaturated fatty acids. Plays an important role in lipid biosynthesis. Plays an important role in regulating the expression of genes that are involved in lipogenesis and in regulating mitochondrial fatty acid oxidation. Plays an important role in body energy homeostasis. Contributes to the biosynthesis of membrane phospholipids, cholesterol esters and triglycerides. This Mesocricetus auratus (Golden hamster) protein is Stearoyl-CoA desaturase (SCD).